Here is a 770-residue protein sequence, read N- to C-terminus: ARF GTPase-activating protein GIT1 (770 aa).

The region spanning 1 to 124 (MSRKGPRAEV…AFVHKLPCRD (124 aa)) is the Arf-GAP domain. The tract at residues 1 to 124 (MSRKGPRAEV…AFVHKLPCRD (124 aa)) is interaction with gamma-tubulin and localization to the centrosome. The C4-type zinc finger occupies 11–34 (CADCSAPDPGWASISRGVLVCDEC). ANK repeat units follow at residues 132–161 (DLSKQLHSSVRTGNLETCLRLLSLGAQANF), 166–195 (KGTTPLHVAAKAGQTLQAELLVVYGADPGS), and 199–228 (NGRTPIDYARQAGHHELAERLVECQYELTD). Tyr-224 carries the post-translational modification Phosphotyrosine. The segment at 245–374 (HYIIPQMADR…QGKSLSSPTD (130 aa)) is interaction with PCLO. The tract at residues 253–424 (DRSRQKCMSQ…NRARSMDSSD (172 aa)) is interaction with PTK2/FAK1. The segment at 254-376 (RSRQKCMSQS…KSLSSPTDNL (123 aa)) is interaction with ARHGEF7. Positions 363-425 (RQQGKSLSSP…RARSMDSSDL (63 aa)) are disordered. The segment covering 366–383 (GKSLSSPTDNLELSARSQ) has biased composition (polar residues). Phosphoserine occurs at positions 368 and 371. Residue Thr-373 is modified to Phosphothreonine. An interaction with NCK2 and GRIN3A region spans residues 375–596 (NLELSARSQS…QEGSRHASKL (222 aa)). Positions 375 to 596 (NLELSARSQS…QEGSRHASKL (222 aa)) are required for localization at synapses. Phosphoserine is present on residues Ser-379 and Ser-384. Residue Tyr-392 is modified to Phosphotyrosine. Residues Ser-394 and Ser-397 each carry the phosphoserine modification. Residues 394 to 403 (SVASDEDTDQ) are compositionally biased toward acidic residues. Thr-401 is subject to Phosphothreonine. Phosphoserine occurs at positions 419, 422, and 426. Residues 420 to 475 (MDSSDLSDGAVTLQEYLELKKALATSEAKVQQLMKVNSSLSDELRRLQREIHKLQA) form an interaction with MAPK1 region. The segment at 429–629 (AVTLQEYLEL…EGKRFLELSK (201 aa)) is interaction with IKBKG. Residues 449–483 (VQQLMKVNSSLSDELRRLQREIHKLQAENLQLRQP) are a coiled coil. Ser-507 and Ser-545 each carry phosphoserine. A Phosphothreonine modification is found at Thr-546. Residues Tyr-554 and Tyr-563 each carry the phosphotyrosine modification. Ser-570, Ser-580, Ser-601, and Ser-605 each carry phosphoserine. Polar residues predominate over residues 578–588 (PSSPLLSCSQE). Residues 578 to 615 (PSSPLLSCSQEGSRHASKLSRHGSGADSDYENTQSGDP) are disordered. Thr-610 bears the Phosphothreonine mark. Phosphoserine is present on Ser-639. Residues 646–770 (PGLPSTEDVI…VTITTREKKQ (125 aa)) are interaction with PXN and TGFB1I1.

Forms homodimers and possibly oligomers. May forms heterooligomers with GIT2. Interacts with G protein-coupled receptor kinases, including GRK2, GRK3, GRK5 and GRK6. Interacts with PPFIA1, PPFIA2 and PPFIA4. Interacts with GRIP1 and forms a ternary complex with PPFIA1 and GRIP1. Directly interacts with ARHGEF7/beta-PIX, forming in vitro a heptameric complex made of a GIT1 dimer and an ARHGEF7 trimer. Directly interacts with PXN/paxillin; this interaction is enhanced in the presence of ARHGEF7. Directly interacts (via C-terminus) with TGFB1I1/Hic-5 (via LD motif 3). Directly interacts with PTK2/FAK1. May interact with PTK2B/PYK2; this interaction may be indirect. Interacts with AMPA receptors GRIA2/3. Directly interacts with protein Piccolo/PCLO. Forms a complex with Ephrin-B1/EFNB1 and NCK2/GRB4 (via SH2); this interaction is important for spine morphogenesis and synapse formation. Interaction with NCK2 is transient and depends upon GIT1 phosphorylation at Tyr-392. Interacts with GRIN3A/GluN3A (via C-terminus); this interaction competes with GIT1 interaction with ARHGEF7 and limits synaptic localization of GIT1. Interacts with IKBKG/NEMO in resting bone mesenchymal stem cells, as well as in TNF-stimulated cells; this interaction may increase IKBKG affinity for 'Lys-63'-linked polyubiquitin chains. Interacts with GABA(A) receptors, including GABRB3 and GABRG2. Interacts with SCRIB. Interacts (via N- and C-terminus) with ENTR1/SDCCAG3 (via N-terminus); this interaction is direct. May form a tripartite complex with ENTR1 and PTPN13. Interacts with YWHAZ. Interacts with PAK1. Interacts with PAK3. Directly interacts (via N-terminus) with gamma-tubulin. Interacts with MAPK1 and MAPK3; this interaction is required for MAPK1/3 recruitment to focal adhesions. In terms of processing, phosphorylated on tyrosine residues by PTK2/FAK1 and SRC in growing fibroblasts. Phosphorylation at Tyr-392 is induced by activation of Ephrin-B1/EFNB1 and catalyzed by SRC family kinases. It is required for the interaction with NCK2 and for GIT1 recruitment to synapses in hippocampal neurons. Expressed in the brain (at protein level). Also expressed at high levels in lung and heart. In lung, expressed in endothelial cells, especially in capillaries; also expressed in smooth muscle and epithelial cells of bronchi (at protein level). Expressed in bone marrow mesenchymal stem cells, as well as in osteoclasts and bone marrow-derived macrophages (at protein level).

The protein localises to the cytoplasm. It is found in the presynapse. Its subcellular location is the postsynapse. It localises to the postsynaptic density. The protein resides in the cell junction. The protein localises to the focal adhesion. It is found in the cell projection. Its subcellular location is the lamellipodium. It localises to the cytoskeleton. The protein resides in the microtubule organizing center. The protein localises to the centrosome. It is found in the spindle pole. Its function is as follows. GTPase-activating protein for ADP ribosylation factor family members, including ARF1. Multidomain scaffold protein that interacts with numerous proteins and therefore participates in many cellular functions, including receptor internalization, focal adhesion remodeling, and signaling by both G protein-coupled receptors and tyrosine kinase receptors. Through PAK1 activation, positively regulates microtubule nucleation during interphase. Plays a role in the regulation of cytokinesis; for this function, may act in a pathway also involving ENTR1 and PTPN13. May promote cell motility both by regulating focal complex dynamics and by the activation of RAC1. May act as scaffold for MAPK1/3 signal transduction, recruiting MAPK1/3 to focal adhesions after EGF stimulation via a Src-dependent pathway, hence stimulating cell migration. Plays a role in brain development and function. Involved in the regulation of spine density and synaptic plasticity that is required for processes involved in learning. Plays an important role in dendritic spine morphogenesis and synapse formation. In hippocampal neurons, recruits guanine nucleotide exchange factors (GEFs), such as ARHGEF7/beta-PIX, to the synaptic membrane. These in turn locally activate RAC1, which is an essential step for spine morphogenesis and synapse formation. May contribute to the organization of presynaptic active zones through oligomerization and formation of a Piccolo/PCLO-based protein network, which includes ARHGEF7/beta-PIX and FAK1. In neurons, through its interaction with liprin-alpha family members, may be required for AMPA receptor (GRIA2/3) proper targeting to the cell membrane. In complex with GABA(A) receptors and ARHGEF7, plays a crucial role in regulating GABA(A) receptor synaptic stability, maintaining GPHN/gephyrin scaffolds and hence GABAergic inhibitory synaptic transmission, by locally coordinating RAC1 and PAK1 downstream effector activity, leading to F-actin stabilization. May also be important for RAC1 downstream signaling pathway through PAK3 and regulation of neuronal inhibitory transmission at presynaptic input. Required for successful bone regeneration during fracture healing. The function in intramembranous ossification may, at least partly, exerted by macrophages in which GIT1 is a key negative regulator of redox homeostasis, IL1B production, and glycolysis, acting through the ERK1/2/NRF2/NFE2L2 axis. May play a role in angiogenesis during fracture healing. In this process, may regulate activation of the canonical NF-kappa-B signal in bone mesenchymal stem cells by enhancing the interaction between NEMO and 'Lys-63'-ubiquitinated RIPK1/RIP1, eventually leading to enhanced production of VEGFA and others angiogenic factors. Essential for VEGF signaling through the activation of phospholipase C-gamma and ERK1/2, hence may control endothelial cell proliferation and angiogenesis. The chain is ARF GTPase-activating protein GIT1 (Git1) from Mus musculus (Mouse).